A 134-amino-acid chain; its full sequence is NAD(P)H-quinone oxidoreductase subunit 3 (134 aa).

Transmembrane regions (helical) follow at residues Gly20–Val40, Met78–Val98, and Leu103–Ala123.

It belongs to the complex I subunit 3 family. In terms of assembly, NDH-1 can be composed of about 15 different subunits; different subcomplexes with different compositions have been identified which probably have different functions.

Its subcellular location is the cellular thylakoid membrane. It catalyses the reaction a plastoquinone + NADH + (n+1) H(+)(in) = a plastoquinol + NAD(+) + n H(+)(out). It carries out the reaction a plastoquinone + NADPH + (n+1) H(+)(in) = a plastoquinol + NADP(+) + n H(+)(out). Functionally, NDH-1 shuttles electrons from an unknown electron donor, via FMN and iron-sulfur (Fe-S) centers, to quinones in the respiratory and/or the photosynthetic chain. The immediate electron acceptor for the enzyme in this species is believed to be plastoquinone. Couples the redox reaction to proton translocation, and thus conserves the redox energy in a proton gradient. Cyanobacterial NDH-1 also plays a role in inorganic carbon-concentration. This is NAD(P)H-quinone oxidoreductase subunit 3 from Prochlorococcus marinus (strain MIT 9303).